The sequence spans 64 residues: Potassium channel toxin kappa-KTx 3.1 (64 aa).

A signal peptide spans 1–26; that stretch reads MKSTLMTASVLILVLLSIVDYASVYA. Positions 27 to 36 are excised as a propeptide; the sequence is EFIDSEISLE. 2 disulfide bridges follow: cysteine 43–cysteine 61 and cysteine 47–cysteine 57.

It belongs to the short scorpion toxin superfamily. Potassium channel inhibitor kappa-KTx family. Kappa-KTx 3 subfamily. Expressed by the venom gland.

Its subcellular location is the secreted. Its function is as follows. Potassium channel inhibitor (Kv). The protein is Potassium channel toxin kappa-KTx 3.1 of Heterometrus petersii (Asian forest scorpion).